A 255-amino-acid polypeptide reads, in one-letter code: uncharacterized protein (255 aa).

The N-terminal stretch at 1-23 (MKRLNKLVLYISFLILVISFTAG) is a signal peptide. Cys-24 is lipidated: N-palmitoyl cysteine. Cys-24 carries S-diacylglycerol cysteine lipidation.

Belongs to the staphylococcal tandem lipoprotein family.

It is found in the cell membrane. This is an uncharacterized protein from Staphylococcus aureus (strain N315).